Consider the following 206-residue polypeptide: Large ribosomal subunit protein uL4 (206 aa).

Belongs to the universal ribosomal protein uL4 family. Part of the 50S ribosomal subunit.

In terms of biological role, one of the primary rRNA binding proteins, this protein initially binds near the 5'-end of the 23S rRNA. It is important during the early stages of 50S assembly. It makes multiple contacts with different domains of the 23S rRNA in the assembled 50S subunit and ribosome. Its function is as follows. Forms part of the polypeptide exit tunnel. This is Large ribosomal subunit protein uL4 from Methylorubrum extorquens (strain CM4 / NCIMB 13688) (Methylobacterium extorquens).